Reading from the N-terminus, the 296-residue chain is MERKDIATPSRTKALLDQFGFNFKKSLGQNFLVDVNIIHKIIDASEIDDNTGIIEVGPGMGSLTEQLAKRAKKVMSFEIDQRLIPVLKETLAPYDNVTIINEDILKADIGKAVKTYLNDCDKIMVVANLPYYITTPILLNLMQQDIPIDGYVVMMQKEVGERLNAQVGTKAYGSLSIVTQYYTETSKVLTVPKSVFMPPPNVDSIVVKLMQRETPLVSVDDEETFFKLAKAAFAQRRKTINNNYQNFFKDGKKHKESILKWLEQTGIDPKRRGETLSIQDFARLYEEKKNFPELEN.

Residues asparagine 30, leucine 32, glycine 57, glutamate 78, aspartate 103, and asparagine 128 each contribute to the S-adenosyl-L-methionine site.

This sequence belongs to the class I-like SAM-binding methyltransferase superfamily. rRNA adenine N(6)-methyltransferase family. RsmA subfamily.

The protein resides in the cytoplasm. The catalysed reaction is adenosine(1518)/adenosine(1519) in 16S rRNA + 4 S-adenosyl-L-methionine = N(6)-dimethyladenosine(1518)/N(6)-dimethyladenosine(1519) in 16S rRNA + 4 S-adenosyl-L-homocysteine + 4 H(+). Functionally, specifically dimethylates two adjacent adenosines (A1518 and A1519) in the loop of a conserved hairpin near the 3'-end of 16S rRNA in the 30S particle. May play a critical role in biogenesis of 30S subunits. The polypeptide is Ribosomal RNA small subunit methyltransferase A (Staphylococcus haemolyticus (strain JCSC1435)).